Here is a 273-residue protein sequence, read N- to C-terminus: Ribosomal RNA small subunit methyltransferase A (273 aa).

Asparagine 18, leucine 20, glycine 45, glutamate 66, aspartate 91, and asparagine 113 together coordinate S-adenosyl-L-methionine.

This sequence belongs to the class I-like SAM-binding methyltransferase superfamily. rRNA adenine N(6)-methyltransferase family. RsmA subfamily.

Its subcellular location is the cytoplasm. It carries out the reaction adenosine(1518)/adenosine(1519) in 16S rRNA + 4 S-adenosyl-L-methionine = N(6)-dimethyladenosine(1518)/N(6)-dimethyladenosine(1519) in 16S rRNA + 4 S-adenosyl-L-homocysteine + 4 H(+). Specifically dimethylates two adjacent adenosines (A1518 and A1519) in the loop of a conserved hairpin near the 3'-end of 16S rRNA in the 30S particle. May play a critical role in biogenesis of 30S subunits. This is Ribosomal RNA small subunit methyltransferase A from Escherichia coli O139:H28 (strain E24377A / ETEC).